The following is a 187-amino-acid chain: DNA-directed RNA polymerase subunit Rpo7 (187 aa).

The S1 motif domain occupies tyrosine 82–arginine 166.

It belongs to the eukaryotic RPB7/RPC8 RNA polymerase subunit family. Part of the RNA polymerase complex. Forms a stalk with Rpo4 that extends from the main structure.

It is found in the cytoplasm. It catalyses the reaction RNA(n) + a ribonucleoside 5'-triphosphate = RNA(n+1) + diphosphate. DNA-dependent RNA polymerase (RNAP) catalyzes the transcription of DNA into RNA using the four ribonucleoside triphosphates as substrates. The sequence is that of DNA-directed RNA polymerase subunit Rpo7 from Methanocaldococcus jannaschii (strain ATCC 43067 / DSM 2661 / JAL-1 / JCM 10045 / NBRC 100440) (Methanococcus jannaschii).